A 232-amino-acid polypeptide reads, in one-letter code: Probable proteasome subunit alpha type-5 (232 aa).

This sequence belongs to the peptidase T1A family. The 26S proteasome consists of a 20S proteasome core and two 19S regulatory subunits. The 20S proteasome core is composed of 28 subunits that are arranged in four stacked rings, resulting in a barrel-shaped structure. The two end rings are each formed by seven alpha subunits, and the two central rings are each formed by seven beta subunits. The catalytic chamber with the active sites is on the inside of the barrel.

It localises to the cytoplasm. It is found in the nucleus. The proteasome degrades poly-ubiquitinated proteins in the cytoplasm and in the nucleus. It is essential for the regulated turnover of proteins and for the removal of misfolded proteins. The proteasome is a multicatalytic proteinase complex that is characterized by its ability to cleave peptides with Arg, Phe, Tyr, Leu, and Glu adjacent to the leaving group at neutral or slightly basic pH. It has an ATP-dependent proteolytic activity. The chain is Probable proteasome subunit alpha type-5 (PUP2) from Encephalitozoon cuniculi (strain GB-M1) (Microsporidian parasite).